The sequence spans 272 residues: Catechol O-methyltransferase (272 aa).

Residues 1–6 (MLEAPP) lie on the Cytoplasmic side of the membrane. Residues 7 to 27 (LLLVAGGVGLALLALRWLATT) form a helical; Signal-anchor for type II membrane protein membrane-spanning segment. At 28 to 272 (DLQFFGRAFI…YKGLSGPARP (245 aa)) the chain is on the extracellular side. Residues Val-93, Glu-115, Ser-123, Glu-141, 168-171 (GASQ), Ser-170, and Asp-192 contribute to the S-adenosyl-L-methionine site. Asp-192 provides a ligand contact to Mg(2+). Lys-195 provides a ligand contact to substrate. Residues Asp-220 and Asn-221 each coordinate Mg(2+). Positions 221 and 250 each coordinate substrate. Ser-267 is modified (phosphoserine).

It belongs to the class I-like SAM-binding methyltransferase superfamily. Cation-dependent O-methyltransferase family. It depends on Mg(2+) as a cofactor.

The protein resides in the cytoplasm. The protein localises to the cell membrane. The catalysed reaction is a catechol + S-adenosyl-L-methionine = a guaiacol + S-adenosyl-L-homocysteine + H(+). It catalyses the reaction 2-hydroxyestrone + S-adenosyl-L-methionine = 2-hydroxy-3-methoxy-estrone + S-adenosyl-L-homocysteine + H(+). It carries out the reaction 4-hydroxyestrone + S-adenosyl-L-methionine = 4-methoxyestrone + S-adenosyl-L-homocysteine + H(+). The enzyme catalyses 2-hydroxyestrone + S-adenosyl-L-methionine = 2-methoxyestrone + S-adenosyl-L-homocysteine + H(+). The catalysed reaction is 4-hydroxy-17beta-estradiol + S-adenosyl-L-methionine = 4-methoxy-17beta-estradiol + S-adenosyl-L-homocysteine + H(+). It catalyses the reaction 2-hydroxy-17beta-estradiol + S-adenosyl-L-methionine = 2-hydroxy-3-methoxy-17beta-estradiol + S-adenosyl-L-homocysteine + H(+). It carries out the reaction 2-hydroxy-17beta-estradiol + S-adenosyl-L-methionine = 2-methoxy-17beta-estradiol + S-adenosyl-L-homocysteine + H(+). Its function is as follows. Catalyzes the O-methylation, and thereby the inactivation, of catecholamine neurotransmitters and catechol hormones. Also shortens the biological half-lives of certain neuroactive drugs, like L-DOPA, alpha-methyl DOPA and isoproterenol. This chain is Catechol O-methyltransferase (COMT), found in Bos taurus (Bovine).